The following is a 484-amino-acid chain: Probable efflux pump outer membrane protein TtgC (484 aa).

The signal sequence occupies residues 1 to 17 (MTKSLLSLAVTAFILGG). A lipid anchor (N-palmitoyl cysteine) is attached at Cys-18. Cys-18 carries S-diacylglycerol cysteine lipidation.

Belongs to the outer membrane factor (OMF) (TC 1.B.17) family.

The protein localises to the cell outer membrane. Functionally, probable outer membrane component of the TtgABC efflux pump with unknown specificity. The chain is Probable efflux pump outer membrane protein TtgC (ttgC) from Pseudomonas putida (strain ATCC 47054 / DSM 6125 / CFBP 8728 / NCIMB 11950 / KT2440).